The chain runs to 213 residues: Imidazole glycerol phosphate synthase subunit HisH (213 aa).

Residues 4 to 213 (SIAIVDYGMG…LYRNFVHWKP (210 aa)) enclose the Glutamine amidotransferase type-1 domain. The active-site Nucleophile is the Cys83. Residues His193 and Glu195 contribute to the active site.

In terms of assembly, heterodimer of HisH and HisF.

It is found in the cytoplasm. It catalyses the reaction 5-[(5-phospho-1-deoxy-D-ribulos-1-ylimino)methylamino]-1-(5-phospho-beta-D-ribosyl)imidazole-4-carboxamide + L-glutamine = D-erythro-1-(imidazol-4-yl)glycerol 3-phosphate + 5-amino-1-(5-phospho-beta-D-ribosyl)imidazole-4-carboxamide + L-glutamate + H(+). The catalysed reaction is L-glutamine + H2O = L-glutamate + NH4(+). It functions in the pathway amino-acid biosynthesis; L-histidine biosynthesis; L-histidine from 5-phospho-alpha-D-ribose 1-diphosphate: step 5/9. Its function is as follows. IGPS catalyzes the conversion of PRFAR and glutamine to IGP, AICAR and glutamate. The HisH subunit catalyzes the hydrolysis of glutamine to glutamate and ammonia as part of the synthesis of IGP and AICAR. The resulting ammonia molecule is channeled to the active site of HisF. The sequence is that of Imidazole glycerol phosphate synthase subunit HisH from Burkholderia lata (strain ATCC 17760 / DSM 23089 / LMG 22485 / NCIMB 9086 / R18194 / 383).